We begin with the raw amino-acid sequence, 341 residues long: L-threonine 3-dehydrogenase (341 aa).

Cys-38 contacts Zn(2+). Catalysis depends on charge relay system residues Thr-40 and His-43. Positions 63, 64, 93, 96, 99, and 107 each coordinate Zn(2+). Residues Ile-175, Asp-195, Arg-200, 262–264, and 286–287 contribute to the NAD(+) site; these read LGI and IY.

It belongs to the zinc-containing alcohol dehydrogenase family. As to quaternary structure, homotetramer. It depends on Zn(2+) as a cofactor.

It is found in the cytoplasm. It catalyses the reaction L-threonine + NAD(+) = (2S)-2-amino-3-oxobutanoate + NADH + H(+). Its pathway is amino-acid degradation; L-threonine degradation via oxydo-reductase pathway; glycine from L-threonine: step 1/2. In terms of biological role, catalyzes the NAD(+)-dependent oxidation of L-threonine to 2-amino-3-ketobutyrate. The chain is L-threonine 3-dehydrogenase from Solibacter usitatus (strain Ellin6076).